The primary structure comprises 549 residues: Cytoplasmic trehalase (549 aa).

Substrate is bound by residues Arg168, 175-176, Asn212, 221-223, 292-294, and Gly324; these read WD, RSQ, and RDE. Residues Asp326 and Glu509 each act as proton donor/acceptor in the active site. Glu525 serves as a coordination point for substrate.

Belongs to the glycosyl hydrolase 37 family. Monomer.

The protein resides in the cytoplasm. It carries out the reaction alpha,alpha-trehalose + H2O = alpha-D-glucose + beta-D-glucose. It functions in the pathway glycan degradation; trehalose degradation; D-glucose from alpha,alpha-trehalose: step 1/1. Its function is as follows. Hydrolyzes trehalose to glucose. Could be involved, in cells returning to low osmolarity conditions, in the utilization of the accumulated cytoplasmic trehalose, which was synthesized in response to high osmolarity. The sequence is that of Cytoplasmic trehalase from Salmonella schwarzengrund (strain CVM19633).